A 444-amino-acid polypeptide reads, in one-letter code: Proline--tRNA ligase (444 aa).

The protein belongs to the class-II aminoacyl-tRNA synthetase family. ProS type 2 subfamily. In terms of assembly, homodimer.

It is found in the cytoplasm. The enzyme catalyses tRNA(Pro) + L-proline + ATP = L-prolyl-tRNA(Pro) + AMP + diphosphate. Its function is as follows. Catalyzes the attachment of proline to tRNA(Pro) in a two-step reaction: proline is first activated by ATP to form Pro-AMP and then transferred to the acceptor end of tRNA(Pro). This is Proline--tRNA ligase from Maricaulis maris (strain MCS10) (Caulobacter maris).